A 375-amino-acid chain; its full sequence is E3 ubiquitin-protein ligase FANCL (375 aa).

The tract at residues 104–294 (QPPSCSFCKD…KDVLEIDFPA (191 aa)) is UBC-RWD region (URD). An RING-type; degenerate zinc finger spans residues 307 to 363 (CGICYARHLNGAIPDQVCNNPQCGQPFHEICLYEWLRGLSTSRQSFNVFFGDCPYCS).

As to quaternary structure, belongs to the multisubunit FA complex composed of FANCA, FANCB, FANCC, FANCE, FANCF, FANCG, FANCL/PHF9 and FANCM. In complex with FANCF, FANCA and FANCG, but not with FANCC, nor FANCE, interacts with HES1; this interaction may be essential for the stability and nuclear localization of FA core complex proteins. Interacts with FANCI. Interacts with GGN. Interacts (via the RING-type zinc finger) with UBE2T and UBE2W. The RING-type zinc finger domain is monoubiquitinated in the presence of UBE2T and UBE2W.

Its subcellular location is the cytoplasm. It localises to the nucleus. The enzyme catalyses S-ubiquitinyl-[E2 ubiquitin-conjugating enzyme]-L-cysteine + [acceptor protein]-L-lysine = [E2 ubiquitin-conjugating enzyme]-L-cysteine + N(6)-ubiquitinyl-[acceptor protein]-L-lysine.. It participates in protein modification; protein ubiquitination. Functionally, ubiquitin ligase protein that mediates monoubiquitination of FANCD2, a key step in the DNA damage pathway. Also mediates monoubiquitination of FANCI. May stimulate the ubiquitin release from UBE2W. May be required for proper primordial germ cell proliferation in the embryonic stage, whereas it is probably not needed for spermatogonial proliferation after birth. The protein is E3 ubiquitin-protein ligase FANCL (Fancl) of Mus musculus (Mouse).